Reading from the N-terminus, the 159-residue chain is 16 kDa outer membrane lipoprotein (159 aa).

The signal sequence occupies residues 1-21 (MNKKIFTLFLVVAASAIFAVS). The N-palmitoyl cysteine moiety is linked to residue C22. A lipid anchor (S-diacylglycerol cysteine) is attached at C22.

It is found in the cell outer membrane. The chain is 16 kDa outer membrane lipoprotein (smpA) from Brachyspira hyodysenteriae (Treponema hyodysenteriae).